Consider the following 310-residue polypeptide: Aspartate carbamoyltransferase catalytic subunit (310 aa).

2 residues coordinate carbamoyl phosphate: arginine 55 and threonine 56. Lysine 83 is a binding site for L-aspartate. Carbamoyl phosphate is bound by residues arginine 105, histidine 133, and glutamine 136. L-aspartate-binding residues include arginine 166 and arginine 220. The carbamoyl phosphate site is built by glycine 261 and proline 262.

It belongs to the aspartate/ornithine carbamoyltransferase superfamily. ATCase family. Heterododecamer (2C3:3R2) of six catalytic PyrB chains organized as two trimers (C3), and six regulatory PyrI chains organized as three dimers (R2).

The enzyme catalyses carbamoyl phosphate + L-aspartate = N-carbamoyl-L-aspartate + phosphate + H(+). Its pathway is pyrimidine metabolism; UMP biosynthesis via de novo pathway; (S)-dihydroorotate from bicarbonate: step 2/3. Functionally, catalyzes the condensation of carbamoyl phosphate and aspartate to form carbamoyl aspartate and inorganic phosphate, the committed step in the de novo pyrimidine nucleotide biosynthesis pathway. The sequence is that of Aspartate carbamoyltransferase catalytic subunit from Chlorobium phaeovibrioides (strain DSM 265 / 1930) (Prosthecochloris vibrioformis (strain DSM 265)).